Consider the following 246-residue polypeptide: Dihydroorotate dehydrogenase B (NAD(+)), electron transfer subunit (246 aa).

The FAD-binding FR-type domain maps to 3 to 97 (EKYTVEKVYE…TGPLGNGFNV (95 aa)). Residues 50 to 53 (RPIS) and 72 to 73 (GT) each bind FAD. Cysteine 211, cysteine 216, cysteine 219, and cysteine 231 together coordinate [2Fe-2S] cluster.

This sequence belongs to the PyrK family. Heterotetramer of 2 PyrK and 2 PyrD type B subunits. It depends on [2Fe-2S] cluster as a cofactor. Requires FAD as cofactor.

It functions in the pathway pyrimidine metabolism; UMP biosynthesis via de novo pathway; orotate from (S)-dihydroorotate (NAD(+) route): step 1/1. Functionally, responsible for channeling the electrons from the oxidation of dihydroorotate from the FMN redox center in the PyrD type B subunit to the ultimate electron acceptor NAD(+). The sequence is that of Dihydroorotate dehydrogenase B (NAD(+)), electron transfer subunit from Clostridium acetobutylicum (strain ATCC 824 / DSM 792 / JCM 1419 / IAM 19013 / LMG 5710 / NBRC 13948 / NRRL B-527 / VKM B-1787 / 2291 / W).